A 72-amino-acid chain; its full sequence is Potassium channel toxin kappa-KTx 5.1 (72 aa).

A signal peptide spans 1-23; it reads MKLLPLLFVILIVCAILPDEASC. Positions 24-43 are excised as a propeptide; that stretch reads DQSELERKEENFKDESREIV. Intrachain disulfides connect C47–C64 and C51–C60. Residue H70 is modified to Histidine amide.

Belongs to the short scorpion toxin superfamily. Potassium channel inhibitor kappa-KTx family. Kappa-KTx 5 subfamily. In terms of tissue distribution, expressed by the venom gland.

It is found in the secreted. Functionally, weak blocker of potassium channels Kv1.1/KCNA1 (IC(50)=578.5 nM-9.9 uM) and Kv1.6/KCNA6 (~60% block at 30 uM of toxin). Acts by binding to the pore and occluding it. Has a voltage-dependent mode of action, which can be explained by a high content of basic residues causing repulsions at higher membrane voltages. Shows a weak interaction with muscle-type nicotinic acetylcholine receptors (nAChR), since it inhibits alpha-bungarotoxin binding to muscle-type nAChR from T.californica (IC(50)=1.4 uM). This suggests it probably weakly inhibits muscle nAChR. The mode of binding to potassium channels of this toxin differs from its homologs (including HefuTx1), since it lacks the key aromatic residue of the functional dyad. In contrast, its functionally important site is composed of a number of basic residues. The sequence is that of Potassium channel toxin kappa-KTx 5.1 from Heterometrus laoticus (Thai giant scorpion).